A 447-amino-acid polypeptide reads, in one-letter code: Argininosuccinate synthase (447 aa).

ATP is bound by residues 17–25 (AFSGGLDTS) and Ala43. Residue Tyr99 coordinates L-citrulline. ATP-binding residues include Gly129 and Thr131. Thr131, Asn135, and Asp136 together coordinate L-aspartate. Asn135 lines the L-citrulline pocket. Asp136 serves as a coordination point for ATP. 2 residues coordinate L-citrulline: Arg139 and Ser192. Asp194 is a binding site for ATP. L-citrulline contacts are provided by Thr201, Glu203, and Glu280.

The protein belongs to the argininosuccinate synthase family. Type 2 subfamily. Homotetramer.

It is found in the cytoplasm. The catalysed reaction is L-citrulline + L-aspartate + ATP = 2-(N(omega)-L-arginino)succinate + AMP + diphosphate + H(+). It participates in amino-acid biosynthesis; L-arginine biosynthesis; L-arginine from L-ornithine and carbamoyl phosphate: step 2/3. The protein is Argininosuccinate synthase of Escherichia coli O1:K1 / APEC.